Here is a 411-residue protein sequence, read N- to C-terminus: Glycerol-3-phosphate dehydrogenase [NAD(+)] (411 aa).

NAD(+) is bound by residues 71 to 76 (GSGNWG), phenylalanine 103, and phenylalanine 159. Lysine 182 is a binding site for substrate. Alanine 215 provides a ligand contact to NAD(+). Lysine 275 functions as the Proton acceptor in the catalytic mechanism. The NAD(+) site is built by arginine 340 and glutamine 369. Position 340 to 341 (340 to 341 (RN)) interacts with substrate.

This sequence belongs to the NAD-dependent glycerol-3-phosphate dehydrogenase family.

The enzyme catalyses sn-glycerol 3-phosphate + NAD(+) = dihydroxyacetone phosphate + NADH + H(+). This Lachancea thermotolerans (Yeast) protein is Glycerol-3-phosphate dehydrogenase [NAD(+)] (GPD).